The primary structure comprises 117 residues: Large ribosomal subunit protein bL20 (117 aa).

The protein belongs to the bacterial ribosomal protein bL20 family.

Its function is as follows. Binds directly to 23S ribosomal RNA and is necessary for the in vitro assembly process of the 50S ribosomal subunit. It is not involved in the protein synthesizing functions of that subunit. In Pasteurella multocida (strain Pm70), this protein is Large ribosomal subunit protein bL20.